The primary structure comprises 916 residues: Protein O-GlcNAcase (916 aa).

The segment at 1–50 (MVQKESQAALEERESERNANPASVSGASLEPSAAPAPGEDNPSGAGAAAG) is disordered. Residues 60–336 (FLCGVVEGFY…TLATWYKSNM (277 aa)) form the GH84 domain. Residues Gly67, Lys98, and Asp174 each contribute to the a protein site. Residue Asp175 is the Proton donor of the active site. A protein is bound by residues Tyr219, 278–280 (WDN), Asp285, and Asn313. Ser364 is modified (phosphoserine). The segment at 440 to 480 (QGAALSGEPSALTKEEEKKQPDEEPMDMVVEKQEESEHKSD) is disordered. 2 stretches are compositionally biased toward basic and acidic residues: residues 452-461 (TKEEEKKQPD) and 468-480 (VVEK…HKSD).

Belongs to the glycosyl hydrolase 84 family. In terms of assembly, monomer. Interacts with CLOCK. In terms of processing, proteolytically cleaved by caspase-3 during apoptosis. The fragments interact with each other; cleavage does not decrease enzyme activity. As to expression, detected in spleen (at protein level). Ubiquitous. Expressed at highest levels in the brain and spleen.

The protein localises to the nucleus. It is found in the cytoplasm. The enzyme catalyses 3-O-(N-acetyl-beta-D-glucosaminyl)-L-seryl-[protein] + H2O = N-acetyl-D-glucosamine + L-seryl-[protein]. It catalyses the reaction 3-O-(N-acetyl-beta-D-glucosaminyl)-L-threonyl-[protein] + H2O = L-threonyl-[protein] + N-acetyl-D-glucosamine. Its activity is regulated as follows. Inhibited by Cu(2+), Hg(2+), Cd(2+) and Zn(2+) at 1 mM. Not inhibited by Co(2+), Mg(2+), Ca(2+), Mn(2+), Fe(3+) and EDTA. Also inhibited by sodium chloride at 1M and 2-amino-2-hydroxymethyl-1,3-propanediol (trishydroxymethylaminomethane) at 75 mM. Its function is as follows. Cleaves GlcNAc but not GalNAc from O-glycosylated proteins. Deglycosylates a large and diverse number of proteins, such as CRYAB, ELK1, GSDMD, LMNB1 and TAB1. Can use p-nitrophenyl-beta-GlcNAc and 4-methylumbelliferone-GlcNAc as substrates but not p-nitrophenyl-beta-GalNAc or p-nitrophenyl-alpha-GlcNAc (in vitro). Does not bind acetyl-CoA and does not have histone acetyltransferase activity. Lacks enzyme activity. This is Protein O-GlcNAcase from Rattus norvegicus (Rat).